Consider the following 302-residue polypeptide: Sulfate adenylyltransferase subunit 2 (302 aa).

The tract at residues 280–302 (RQGRAIDHDQSGSMELKKRQGYF) is disordered.

Belongs to the PAPS reductase family. CysD subfamily. As to quaternary structure, heterodimer composed of CysD, the smaller subunit, and CysN.

It catalyses the reaction sulfate + ATP + H(+) = adenosine 5'-phosphosulfate + diphosphate. It participates in sulfur metabolism; hydrogen sulfide biosynthesis; sulfite from sulfate: step 1/3. Functionally, with CysN forms the ATP sulfurylase (ATPS) that catalyzes the adenylation of sulfate producing adenosine 5'-phosphosulfate (APS) and diphosphate, the first enzymatic step in sulfur assimilation pathway. APS synthesis involves the formation of a high-energy phosphoric-sulfuric acid anhydride bond driven by GTP hydrolysis by CysN coupled to ATP hydrolysis by CysD. This chain is Sulfate adenylyltransferase subunit 2, found in Vibrio atlanticus (strain LGP32) (Vibrio splendidus (strain Mel32)).